The primary structure comprises 498 residues: Ulvan-active sulfatase (498 aa).

Positions 1 to 22 (MNSKKTGVIILGCIAFLHIACS) are cleaved as a signal peptide. Ca(2+) contacts are provided by aspartate 55, aspartate 56, cysteine 95, aspartate 266, and histidine 267. Cysteine 95 functions as the Nucleophile in the catalytic mechanism. Residue cysteine 95 is modified to 3-oxoalanine (Cys).

The protein belongs to the sulfatase family. Ca(2+) is required as a cofactor. Post-translationally, the conversion to 3-oxoalanine (also known as C-formylglycine, FGly), of a serine or cysteine residue in prokaryotes and of a cysteine residue in eukaryotes, is critical for catalytic activity. This post-translational modification is severely defective in multiple sulfatase deficiency (MSD).

The protein localises to the periplasm. Its function is as follows. Sulfatase involved in ulvan degradation. Ulvan is the main polysaccharide component of the Ulvales (green seaweed) cell wall. It is composed of disaccharide building blocks comprising 3-sulfated rhamnose (Rha3S) linked to D-glucuronic acid (GlcA), L-iduronic acid (IduA), or D-xylose (Xyl). The sequence is that of Ulvan-active sulfatase from Formosa agariphila (strain DSM 15362 / KCTC 12365 / LMG 23005 / KMM 3901 / M-2Alg 35-1).